The sequence spans 1152 residues: Alpha-mannosidase 2x (1152 aa).

The Cytoplasmic portion of the chain corresponds to 1–5 (MKLKK). The helical; Signal-anchor for type II membrane protein transmembrane segment at 6 to 26 (QVTVCGAAIFCVAVFSLYLML) threads the bilayer. At 27–796 (DRVQHDPARH…VDEEQEQQME (770 aa)) the chain is on the lumenal side. Positions 43-74 (PRSQISVLQNRIEQLEQLLEENHDIISRIKDS) form a coiled coil. Zn(2+)-binding residues include histidine 175 and aspartate 177. A glycan (N-linked (GlcNAc...) asparagine) is linked at asparagine 225. Zn(2+) is bound at residue aspartate 289. Aspartate 289 acts as the Nucleophile in catalysis. Asparagine 305 carries N-linked (GlcNAc...) asparagine glycosylation. Histidine 569 contributes to the Zn(2+) binding site.

The protein belongs to the glycosyl hydrolase 38 family. As to quaternary structure, homodimer; disulfide-linked. Interacts with MGAT4D. It depends on Zn(2+) as a cofactor.

It localises to the golgi apparatus membrane. It catalyses the reaction N(4)-{beta-D-GlcNAc-(1-&gt;2)-alpha-D-Man-(1-&gt;3)-[alpha-D-Man-(1-&gt;3)-[alpha-D-Man-(1-&gt;6)]-alpha-D-Man-(1-&gt;6)]-beta-D-Man-(1-&gt;4)-beta-D-GlcNAc-(1-&gt;4)-beta-D-GlcNAc}-L-asparaginyl-[protein] + 2 H2O = 2 alpha-D-mannopyranose + an N(4)-{beta-D-GlcNAc-(1-&gt;2)-alpha-D-Man-(1-&gt;3)-[alpha-D-Man-(1-&gt;6)]-beta-D-Man-(1-&gt;4)-beta-D-GlcNAc-(1-&gt;4)-beta-D-GlcNAc}-L-asparaginyl-[protein]. It functions in the pathway protein modification; protein glycosylation. Catalyzes the first committed step in the biosynthesis of complex N-glycans. It controls conversion of high mannose to complex N-glycans; the final hydrolytic step in the N-glycan maturation pathway. The polypeptide is Alpha-mannosidase 2x (Man2a2) (Mus musculus (Mouse)).